Here is a 271-residue protein sequence, read N- to C-terminus: Undecaprenyl-diphosphatase (271 aa).

A run of 8 helical transmembrane segments spans residues 5–25 (YALF…FLPV), 45–65 (AATF…AVFW), 86–106 (TLSL…GLGI), 114–134 (LFGP…LIIA), 149–169 (ISYK…WPGF), 189–209 (AAEF…GLDL), 226–246 (VGFI…LALI), and 251–271 (FIPF…VFVA).

It belongs to the UppP family.

It is found in the cell inner membrane. It catalyses the reaction di-trans,octa-cis-undecaprenyl diphosphate + H2O = di-trans,octa-cis-undecaprenyl phosphate + phosphate + H(+). Catalyzes the dephosphorylation of undecaprenyl diphosphate (UPP). Confers resistance to bacitracin. This Aeromonas salmonicida (strain A449) protein is Undecaprenyl-diphosphatase.